A 382-amino-acid polypeptide reads, in one-letter code: RIB43A-like with coiled-coils protein 2 (382 aa).

The stretch at 222–255 forms a coiled coil; that stretch reads NKSQAIESVERKKQEKKQEQEDNLAEITNLLRGD.

This sequence belongs to the RIB43A family. Microtubule inner protein component of sperm flagellar doublet microtubules. As to expression, expressed in airway epithelial cells.

The protein resides in the cytoplasm. It is found in the cytoskeleton. Its subcellular location is the cilium axoneme. It localises to the flagellum axoneme. Its function is as follows. Microtubule inner protein (MIP) part of the dynein-decorated doublet microtubules (DMTs) in cilia axoneme, which is required for motile cilia beating. The sequence is that of RIB43A-like with coiled-coils protein 2 from Homo sapiens (Human).